A 947-amino-acid chain; its full sequence is Serine/threonine-protein kinase PKH2 (947 aa).

Over residues 1-14 the composition is skewed to basic residues; sequence MHKFRYSLHQHYSK. Disordered stretches follow at residues 1 to 43, 108 to 132, and 162 to 212; these read MHKF…SSSS, SLGN…LSSH, and FNHL…NEEN. The segment covering 108 to 117 has biased composition (polar residues); it reads SLGNTTNETG. A compositionally biased stretch (acidic residues) spans 187 to 198; the sequence is NTEEEENNDDTD. Residues 199-212 show a composition bias toward basic and acidic residues; it reads EIPKSETLKQNEEN. Positions 240–502 constitute a Protein kinase domain; the sequence is FKFGKELGEG…IPEIQKHYFF (263 aa). Residues 250 to 252 and lysine 269 contribute to the ATP site; that span reads SYS. Residues 271-316 are PIF-pocket; that stretch reads LDKRHIIKEKKVKYVNIEKHALNRLSNRLGVISLYFTFQDKDSLYF. Residues 319-321 and glutamate 325 each bind ATP; that span reads DYA. Aspartate 364 serves as the catalytic Proton acceptor. Residues glutamate 368 and aspartate 382 each contribute to the ATP site. Low complexity-rich tracts occupy residues 550–579 and 618–632; these read VKKS…KGSS and SSTS…SNSN. Disordered stretches follow at residues 550 to 598, 611 to 644, 660 to 686, and 794 to 816; these read VKKS…STEK, KPAT…QQDY, SVGS…IHQQ, and NMKR…ASTS. Basic and acidic residues predominate over residues 802 to 811; sequence DSKKSMDIER.

This sequence belongs to the protein kinase superfamily. AGC Ser/Thr protein kinase family. PDPK1 subfamily.

The protein localises to the nucleus. It localises to the cytoplasm. It is found in the cell cortex. It catalyses the reaction L-seryl-[protein] + ATP = O-phospho-L-seryl-[protein] + ADP + H(+). The catalysed reaction is L-threonyl-[protein] + ATP = O-phospho-L-threonyl-[protein] + ADP + H(+). In terms of biological role, serine/threonine-protein kinase which is part sphingolipid-mediated signaling pathway that is required for the internalization step of endocytosis by regulating eisosome assembly and organization, and modulating the organization of the plasma membrane. Phosphorylates and activates PKC1. Activates YPK1 and YPK2, 2 components of signaling cascade required for maintenance of cell wall integrity. Required for stress-induced P-body assembly and regulates global mRNA decay at the deadenylation step. The protein is Serine/threonine-protein kinase PKH2 of Candida albicans (strain SC5314 / ATCC MYA-2876) (Yeast).